We begin with the raw amino-acid sequence, 1040 residues long: Multidrug resistance protein MdtB (1040 aa).

The next 12 helical transmembrane spans lie at 16 to 36, 347 to 367, 369 to 389, 396 to 416, 440 to 460, 472 to 492, 537 to 557, 863 to 883, 888 to 908, 911 to 931, 968 to 988, and 998 to 1018; these read FILR…AGII, LMLA…NIPA, IIPA…MVFL, LTLM…IVVI, IGFT…PLLF, FAVT…TLTP, WLTL…WIFI, LGST…VLGV, FIHP…ALLA, IAGA…IGIV, ILMT…STGV, and IGMV…TPVI.

Belongs to the resistance-nodulation-cell division (RND) (TC 2.A.6) family. MdtB subfamily. Part of a tripartite efflux system composed of MdtA, MdtB and MdtC. MdtB forms a heteromultimer with MdtC.

The protein localises to the cell inner membrane. In Cronobacter sakazakii (strain ATCC BAA-894) (Enterobacter sakazakii), this protein is Multidrug resistance protein MdtB.